The chain runs to 86 residues: Large ribosomal subunit protein bL31 (86 aa).

Zn(2+) contacts are provided by C16, C18, C38, and C41.

It belongs to the bacterial ribosomal protein bL31 family. Type A subfamily. Part of the 50S ribosomal subunit. Zn(2+) is required as a cofactor.

Functionally, binds the 23S rRNA. The polypeptide is Large ribosomal subunit protein bL31 (Acidothermus cellulolyticus (strain ATCC 43068 / DSM 8971 / 11B)).